Reading from the N-terminus, the 435-residue chain is Indole diterpene prenyltransferase atmD (435 aa).

Residues 81–82 (AY) and Glu-90 each bind L-tryptophan. Substrate-binding residues include Arg-103, Lys-190, Arg-261, Lys-263, Tyr-265, Tyr-346, and Tyr-413.

This sequence belongs to the tryptophan dimethylallyltransferase family.

In terms of biological role, indole diterpene prenyltransferase; part of the ATM2 gene cluster that mediates the biosynthesis of aflatrem, a tremorgenic mycotoxin with acute neurotoxic effects. Synthesis of geranylgeranyl diphosphate (GGPP) by AtmG (a GGPP synthase) precedes condensation of GGPP with indole 3-glycerol phosphate, followed by epoxidation and cyclization by AtmM (a FAD-dependent monooxygenase) and AtmC (a prenyltransferase) to produce paspaline. AtmB is also essential for paspaline production, but its exact role has not been identified yet. AtmP, a cytochrome P450 monooxygenase, subsequently converts paspaline to 13-desoxypaxilline via PC-M6 by removal of the C-30 methyl group and oxidation at C-10. AtmQ, a cytochrome P450 monooxygenase, then catalyzes the oxidation of 13-desoxypaxilline, first at C-7 to produce paspalicine and then at C-13 to form paspalinine. Finally, AtmD prenylates paspalinine to form aflatrem. The protein is Indole diterpene prenyltransferase atmD of Aspergillus flavus.